A 590-amino-acid polypeptide reads, in one-letter code: Acetylcholinesterase (590 aa).

A signal peptide spans 1 to 24 (MREMNLLVTSSLGVLLHLVVLCQA). Asparagine 83 is a glycosylation site (N-linked (GlcNAc...) asparagine). Cysteine 91 and cysteine 118 are disulfide-bonded. The active-site Acyl-ester intermediate is the serine 224. A disulfide bridge links cysteine 278 with cysteine 289. Catalysis depends on glutamate 351, which acts as the Charge relay system. The cysteines at positions 426 and 545 are disulfide-linked. Asparagine 440 is a glycosylation site (N-linked (GlcNAc...) asparagine). Catalysis depends on histidine 464, which acts as the Charge relay system. N-linked (GlcNAc...) asparagine glycans are attached at residues asparagine 481 and asparagine 557. Serine 567 is lipidated: GPI-anchor amidated serine. Residues 568–590 (SGTSSSKGIIFYVLFSILYLIFY) constitute a propeptide, removed in mature form.

Belongs to the type-B carboxylesterase/lipase family. Isoform H form is a homodimer; the asymmetric form is a disulfide-bonded oligomer composed of a collagenic subunit (Q) and a variable number of T catalytic subunits. In terms of processing, an interchain disulfide bond is present in what becomes position 596 of the T isoform. Found in the synapses and to a lower extent in extrajunctional areas of muscle and nerve, and on erythrocyte membranes.

It localises to the cell membrane. Its subcellular location is the synapse. The enzyme catalyses acetylcholine + H2O = choline + acetate + H(+). Its function is as follows. Terminates signal transduction at the neuromuscular junction by rapid hydrolysis of the acetylcholine released into the synaptic cleft. May be involved in cell-cell interactions. This is Acetylcholinesterase (ache) from Torpedo marmorata (Marbled electric ray).